Consider the following 309-residue polypeptide: Uricase-2 isozyme 2 (309 aa).

Residues Lys-18 and Thr-64 each act as charge relay system in the active site. 7 residues coordinate urate: Thr-64, Asp-65, Phe-166, Arg-183, Val-238, Gln-239, and Asn-265. The active-site Charge relay system is the His-267.

This sequence belongs to the uricase family. In terms of assembly, homotetramer.

It is found in the peroxisome. It catalyses the reaction urate + O2 + H2O = 5-hydroxyisourate + H2O2. It participates in purine metabolism; urate degradation; (S)-allantoin from urate: step 1/3. Functionally, catalyzes the oxidation of uric acid to 5-hydroxyisourate, which is further processed to form (S)-allantoin. The sequence is that of Uricase-2 isozyme 2 from Glycine max (Soybean).